The chain runs to 428 residues: Phosphomethylpyrimidine synthase 1 (428 aa).

Residues Asn65, Met94, Tyr123, His158, 180-182 (SRG), 221-224 (DGMR), and Glu260 contribute to the substrate site. Zn(2+) is bound at residue His264. Substrate is bound at residue Tyr287. Zn(2+) is bound at residue His328. 3 residues coordinate [4Fe-4S] cluster: Cys405, Cys408, and Cys412.

Belongs to the ThiC family. [4Fe-4S] cluster serves as cofactor.

It catalyses the reaction 5-amino-1-(5-phospho-beta-D-ribosyl)imidazole + S-adenosyl-L-methionine = 4-amino-2-methyl-5-(phosphooxymethyl)pyrimidine + CO + 5'-deoxyadenosine + formate + L-methionine + 3 H(+). It functions in the pathway cofactor biosynthesis; thiamine diphosphate biosynthesis. Functionally, catalyzes the synthesis of the hydroxymethylpyrimidine phosphate (HMP-P) moiety of thiamine from aminoimidazole ribotide (AIR) in a radical S-adenosyl-L-methionine (SAM)-dependent reaction. This is Phosphomethylpyrimidine synthase 1 from Methanosarcina mazei (strain ATCC BAA-159 / DSM 3647 / Goe1 / Go1 / JCM 11833 / OCM 88) (Methanosarcina frisia).